Here is a 453-residue protein sequence, read N- to C-terminus: UDP-N-acetylmuramoylalanine--D-glutamate ligase (453 aa).

An ATP-binding site is contributed by 120–126 (GSNGKST).

The protein belongs to the MurCDEF family.

It is found in the cytoplasm. The enzyme catalyses UDP-N-acetyl-alpha-D-muramoyl-L-alanine + D-glutamate + ATP = UDP-N-acetyl-alpha-D-muramoyl-L-alanyl-D-glutamate + ADP + phosphate + H(+). Its pathway is cell wall biogenesis; peptidoglycan biosynthesis. In terms of biological role, cell wall formation. Catalyzes the addition of glutamate to the nucleotide precursor UDP-N-acetylmuramoyl-L-alanine (UMA). In Teredinibacter turnerae (strain ATCC 39867 / T7901), this protein is UDP-N-acetylmuramoylalanine--D-glutamate ligase.